The sequence spans 427 residues: Flotillin-1 (427 aa).

Ser-19, Ser-163, and Ser-385 each carry phosphoserine. Thr-387 carries the post-translational modification Phosphothreonine.

This sequence belongs to the band 7/mec-2 family. Flotillin subfamily. As to quaternary structure, heterooligomeric complex of flotillin-1 and flotillin-2 and caveolin-1 and caveolin-2. Interacts with ECPAS.

The protein resides in the cell membrane. It localises to the endosome. It is found in the membrane. The protein localises to the caveola. Its subcellular location is the melanosome. The protein resides in the membrane raft. May act as a scaffolding protein within caveolar membranes, functionally participating in formation of caveolae or caveolae-like vesicles. The polypeptide is Flotillin-1 (FLOT1) (Homo sapiens (Human)).